Reading from the N-terminus, the 156-residue chain is uncharacterized protein (156 aa).

Residues 11–156 (EEFRSYLTYT…ETDVVMSKKL (146 aa)) form the N-acetyltransferase domain.

Belongs to the acetyltransferase family. Homodimer.

This is an uncharacterized protein from Bacillus subtilis (strain 168).